We begin with the raw amino-acid sequence, 327 residues long: Phenylalanine--tRNA ligase alpha subunit (327 aa).

A Mg(2+)-binding site is contributed by glutamate 252.

This sequence belongs to the class-II aminoacyl-tRNA synthetase family. Phe-tRNA synthetase alpha subunit type 1 subfamily. As to quaternary structure, tetramer of two alpha and two beta subunits. It depends on Mg(2+) as a cofactor.

The protein resides in the cytoplasm. The enzyme catalyses tRNA(Phe) + L-phenylalanine + ATP = L-phenylalanyl-tRNA(Phe) + AMP + diphosphate + H(+). This chain is Phenylalanine--tRNA ligase alpha subunit, found in Edwardsiella ictaluri (strain 93-146).